The following is a 205-amino-acid chain: Anaerobic dimethyl sulfoxide reductase chain B (205 aa).

4Fe-4S ferredoxin-type domains follow at residues 5-33, 59-89, and 90-119; these read YGFF…LTPE, FAYY…KRED, and GFVV…YNET. The [4Fe-4S] cluster site is built by Cys-14, Cys-17, Cys-20, Cys-24, Cys-67, Cys-70, Cys-75, Cys-79, Cys-99, Cys-102, Cys-105, Cys-109, Cys-126, Cys-129, Cys-141, and Cys-145. A disordered region spans residues 184 to 205; that stretch reads KPNANSRPTGDTTGYLANPKEV. Over residues 186–195 the composition is skewed to polar residues; the sequence is NANSRPTGDT.

As to quaternary structure, heterotrimeric enzyme composed of a catalytic heterodimer (DmsAB) and a membrane anchor protein (DmsC). [4Fe-4S] cluster is required as a cofactor.

In terms of biological role, electron transfer subunit of the terminal reductase during anaerobic growth on various sulfoxide and N-oxide compounds. This chain is Anaerobic dimethyl sulfoxide reductase chain B (dmsB), found in Escherichia coli (strain K12).